The sequence spans 84 residues: Small ribosomal subunit protein uS17 (84 aa).

Belongs to the universal ribosomal protein uS17 family. Part of the 30S ribosomal subunit.

One of the primary rRNA binding proteins, it binds specifically to the 5'-end of 16S ribosomal RNA. In Aliivibrio fischeri (strain ATCC 700601 / ES114) (Vibrio fischeri), this protein is Small ribosomal subunit protein uS17.